Consider the following 150-residue polypeptide: CCAAT/enhancer-binding protein gamma (150 aa).

Residue K3 forms a Glycyl lysine isopeptide (Lys-Gly) (interchain with G-Cter in SUMO2) linkage. Positions 27-94 (GLQQVPQLVP…QKAQDTLQRV (68 aa)) are disordered. A compositionally biased stretch (low complexity) spans 28–37 (LQQVPQLVPA). The span at 56-72 (SPMDRNSDEYRQRRERN) shows a compositional bias: basic and acidic residues. Residues 62 to 125 (SDEYRQRRER…SVLKDLFLEH (64 aa)) enclose the bZIP domain. The tract at residues 66–93 (RQRRERNNMAVKKSRLKSKQKAQDTLQR) is basic motif. Residues 97–118 (LKEENERLEAKIKLLTKELSVL) are leucine-zipper.

This sequence belongs to the bZIP family. C/EBP subfamily. Binds DNA as a dimer and can form stable heterodimers with CEBPA and CEBPB. Interacts with ZNF638; this interaction increases transcriptional activation.

Its subcellular location is the nucleus. Its function is as follows. Transcription factor that binds to the promoter and the enhancer regions of target genes. Binds to the enhancer element PRE-I (positive regulatory element-I) of the IL-4 gene. Binds to the promoter and the enhancer of the immunoglobulin heavy chain. Binds to GPE1, a cis-acting element in the G-CSF gene promoter. The chain is CCAAT/enhancer-binding protein gamma (CEBPG) from Homo sapiens (Human).